Consider the following 139-residue polypeptide: Putative pre-16S rRNA nuclease (139 aa).

The protein belongs to the YqgF nuclease family.

The protein resides in the cytoplasm. Could be a nuclease involved in processing of the 5'-end of pre-16S rRNA. The sequence is that of Putative pre-16S rRNA nuclease from Streptococcus sanguinis (strain SK36).